Consider the following 246-residue polypeptide: 2,5-diamino-6-ribosylamino-4(3H)-pyrimidinone 5'-phosphate reductase (246 aa).

Residues Thr-78, Asp-82, Leu-163, and 186–190 (GAEVL) each bind NADP(+).

Belongs to the HTP reductase family. As to quaternary structure, homodimer.

It catalyses the reaction 2,5-diamino-6-(1-D-ribitylamino)pyrimidin-4(3H)-one 5'-phosphate + NADP(+) = 2,5-diamino-6-(1-D-ribosylamino)pyrimidin-4(3H)-one 5'-phosphate + NADPH + H(+). The enzyme catalyses 2,5-diamino-6-(1-D-ribitylamino)pyrimidin-4(3H)-one 5'-phosphate + NAD(+) = 2,5-diamino-6-(1-D-ribosylamino)pyrimidin-4(3H)-one 5'-phosphate + NADH + H(+). Its pathway is cofactor biosynthesis; riboflavin biosynthesis. Functionally, catalyzes an early step in riboflavin biosynthesis, the NADPH-dependent reduction of the ribose side chain of 2,5-diamino-6-ribosylamino-4(3H)-pyrimidinone 5'-phosphate, yielding 2,5-diamino-6-ribitylamino-4(3H)-pyrimidinone 5'-phosphate. The polypeptide is 2,5-diamino-6-ribosylamino-4(3H)-pyrimidinone 5'-phosphate reductase (RIB7) (Eremothecium gossypii (strain ATCC 10895 / CBS 109.51 / FGSC 9923 / NRRL Y-1056) (Yeast)).